The chain runs to 79 residues: Protein S100-G (79 aa).

An N-acetylserine modification is found at S2. 2 EF-hand domains span residues 13-48 (IFQK…KASS) and 45-79 (KASS…KLSQ). Residues Q26 and E31 each coordinate Ca(2+). Residues S42 and S47 each carry the phosphoserine modification. 5 residues coordinate Ca(2+): D58, N60, D62, E64, and E69.

Belongs to the S-100 family.

The sequence is that of Protein S100-G (S100g) from Rattus norvegicus (Rat).